Consider the following 426-residue polypeptide: D-tagatose-1,6-bisphosphate aldolase subunit KbaZ (426 aa).

This sequence belongs to the GatZ/KbaZ family. KbaZ subfamily. Forms a complex with KbaY.

Its pathway is carbohydrate metabolism; D-tagatose 6-phosphate degradation; D-glyceraldehyde 3-phosphate and glycerone phosphate from D-tagatose 6-phosphate: step 2/2. In terms of biological role, component of the tagatose-1,6-bisphosphate aldolase KbaYZ that is required for full activity and stability of the Y subunit. Could have a chaperone-like function for the proper and stable folding of KbaY. When expressed alone, KbaZ does not show any aldolase activity. The sequence is that of D-tagatose-1,6-bisphosphate aldolase subunit KbaZ from Shigella flexneri.